Here is a 396-residue protein sequence, read N- to C-terminus: Chalcone synthase A (396 aa).

The active site involves Cys170.

The protein belongs to the thiolase-like superfamily. Chalcone/stilbene synthases family.

The enzyme catalyses (E)-4-coumaroyl-CoA + 3 malonyl-CoA + 3 H(+) = 2',4,4',6'-tetrahydroxychalcone + 3 CO2 + 4 CoA. It participates in secondary metabolite biosynthesis; flavonoid biosynthesis. Functionally, the primary product of this enzyme is 4,2',4',6'-tetrahydroxychalcone (also termed naringenin-chalcone or chalcone) which can under specific conditions spontaneously isomerize into naringenin. This chain is Chalcone synthase A (CHSA), found in Ipomoea purpurea (Common morning glory).